We begin with the raw amino-acid sequence, 253 residues long: Major prion protein (253 aa).

The N-terminal stretch at 1–22 (MANLGCWMLVLFVATWSDLGLC) is a signal peptide. The tract at residues 23–38 (KKRPKPGGWNTGGSRY) is interaction with ADGRG6. The interaction with GRB2, ERI3 and SYN1 stretch occupies residues 23 to 230 (KKRPKPGGWN…ESQAYYQRGS (208 aa)). The disordered stretch occupies residues 26-108 (PKPGGWNTGG…WNKPSKPKTN (83 aa)). 5 tandem repeats follow at residues 51–59 (PQGGGGWGQ), 60–67 (PHGGGWGQ), 68–75 (PHGGGWGQ), 76–83 (PHGGGWGQ), and 84–91 (PHGGGWGQ). The 5 X 8 AA tandem repeats of P-H-G-G-G-W-G-Q stretch occupies residues 51-91 (PQGGGGWGQPHGGGWGQPHGGGWGQPHGGGWGQPHGGGWGQ). The span at 52-95 (QGGGGWGQPHGGGWGQPHGGGWGQPHGGGWGQPHGGGWGQGGGT) shows a compositional bias: gly residues. Residues His61, Gly62, Gly63, His69, Gly70, Gly71, His77, Gly78, Gly79, His85, Gly86, and Gly87 each coordinate Cu(2+). Cysteines 179 and 214 form a disulfide. N-linked (GlcNAc...) asparagine glycans are attached at residues Asn181 and Asn197. Ser230 is lipidated: GPI-anchor amidated serine. A propeptide spans 231 to 253 (SMVLFSSPPVILLISFLIFLIVG) (removed in mature form).

Belongs to the prion family. As to quaternary structure, monomer and homodimer. Has a tendency to aggregate into amyloid fibrils containing a cross-beta spine, formed by a steric zipper of superposed beta-strands. Soluble oligomers may represent an intermediate stage on the path to fibril formation. Copper binding may promote oligomerization. Interacts with GRB2, APP, ERI3/PRNPIP and SYN1. Mislocalized cytosolically exposed PrP interacts with MGRN1; this interaction alters MGRN1 subcellular location and causes lysosomal enlargement. Interacts with APP. Interacts with KIAA1191. Interacts with ADGRG6.

The protein resides in the cell membrane. Its subcellular location is the golgi apparatus. Its function is as follows. Its primary physiological function is unclear. May play a role in neuronal development and synaptic plasticity. May be required for neuronal myelin sheath maintenance. May promote myelin homeostasis through acting as an agonist for ADGRG6 receptor. May play a role in iron uptake and iron homeostasis. Soluble oligomers are toxic to cultured neuroblastoma cells and induce apoptosis (in vitro). Association with GPC1 (via its heparan sulfate chains) targets PRNP to lipid rafts. Also provides Cu(2+) or Zn(2+) for the ascorbate-mediated GPC1 deaminase degradation of its heparan sulfate side chains. The polypeptide is Major prion protein (PRNP) (Gorilla gorilla gorilla (Western lowland gorilla)).